A 340-amino-acid polypeptide reads, in one-letter code: Coproporphyrin III ferrochelatase (340 aa).

Fe-coproporphyrin III is bound by residues Ser52 and Tyr116. Fe(2+) contacts are provided by His172 and Glu255.

It belongs to the ferrochelatase family.

It localises to the cytoplasm. The enzyme catalyses Fe-coproporphyrin III + 2 H(+) = coproporphyrin III + Fe(2+). It functions in the pathway porphyrin-containing compound metabolism; protoheme biosynthesis. In terms of biological role, involved in coproporphyrin-dependent heme b biosynthesis. Catalyzes the insertion of ferrous iron into coproporphyrin III to form Fe-coproporphyrin III. The chain is Coproporphyrin III ferrochelatase from Mycobacterium ulcerans (strain Agy99).